A 104-amino-acid chain; its full sequence is Large ribosomal subunit protein bL21 (104 aa).

This sequence belongs to the bacterial ribosomal protein bL21 family. Part of the 50S ribosomal subunit. Contacts protein L20.

This protein binds to 23S rRNA in the presence of protein L20. This is Large ribosomal subunit protein bL21 from Tropheryma whipplei (strain Twist) (Whipple's bacillus).